A 230-amino-acid chain; its full sequence is Large ribosomal subunit protein uL1 (230 aa).

It belongs to the universal ribosomal protein uL1 family. In terms of assembly, part of the 50S ribosomal subunit.

Its function is as follows. Binds directly to 23S rRNA. The L1 stalk is quite mobile in the ribosome, and is involved in E site tRNA release. Functionally, protein L1 is also a translational repressor protein, it controls the translation of the L11 operon by binding to its mRNA. In Ruminiclostridium cellulolyticum (strain ATCC 35319 / DSM 5812 / JCM 6584 / H10) (Clostridium cellulolyticum), this protein is Large ribosomal subunit protein uL1.